The following is a 460-amino-acid chain: Proline--tRNA ligase (460 aa).

Belongs to the class-II aminoacyl-tRNA synthetase family. ProS type 3 subfamily. As to quaternary structure, homodimer.

Its subcellular location is the cytoplasm. It carries out the reaction tRNA(Pro) + L-proline + ATP = L-prolyl-tRNA(Pro) + AMP + diphosphate. Catalyzes the attachment of proline to tRNA(Pro) in a two-step reaction: proline is first activated by ATP to form Pro-AMP and then transferred to the acceptor end of tRNA(Pro). This chain is Proline--tRNA ligase, found in Methanococcus maripaludis (strain C7 / ATCC BAA-1331).